The primary structure comprises 150 residues: MADKFHILLLNGPNLNLLGTREPDKYGHTTLADITADLSALAGSLGAEFSHFQSNAEHALIDRIHQARGNTDFIVINPAAFTHTSVALRDALLAVNIPFIEIHLSNVHAREPFRHHSYLSDIAIGVICGLGADGYHFALQTAVKRLSTSN.

Tyr26 serves as the catalytic Proton acceptor. Asn77, His83, and Asp90 together coordinate substrate. His103 functions as the Proton donor in the catalytic mechanism. Substrate is bound by residues Leu104 to Ser105 and Arg114.

This sequence belongs to the type-II 3-dehydroquinase family. In terms of assembly, homododecamer.

It catalyses the reaction 3-dehydroquinate = 3-dehydroshikimate + H2O. Its pathway is metabolic intermediate biosynthesis; chorismate biosynthesis; chorismate from D-erythrose 4-phosphate and phosphoenolpyruvate: step 3/7. In terms of biological role, catalyzes a trans-dehydration via an enolate intermediate. This Sodalis glossinidius (strain morsitans) protein is 3-dehydroquinate dehydratase.